The primary structure comprises 123 residues: MVRLLGIDLPRNKRIAYALTYIHGIGLTSAQKFIELAEISADTRTDDITTEQAVVLRNLLENCELNLEGDLRRFNGLNIKRLNEINCHRGKRHRNSLPVRGQRTRTNARSRRGAKKTVTGKKK.

The tract at residues 90 to 123 (GKRHRNSLPVRGQRTRTNARSRRGAKKTVTGKKK) is disordered. Positions 102–123 (QRTRTNARSRRGAKKTVTGKKK) are enriched in basic residues.

The protein belongs to the universal ribosomal protein uS13 family. In terms of assembly, part of the 30S ribosomal subunit.

It is found in the plastid. The protein localises to the chloroplast. Functionally, located at the top of the head of the 30S subunit, it contacts several helices of the 16S rRNA. The protein is Small ribosomal subunit protein uS13c of Thalassiosira pseudonana (Marine diatom).